We begin with the raw amino-acid sequence, 278 residues long: HTH-type transcriptional activator RhaS (278 aa).

Residues 174-272 (NLLLAWLEDH…NWSPRDIRQG (99 aa)) enclose the HTH araC/xylS-type domain. DNA-binding regions (H-T-H motif) lie at residues 191–212 (DAVA…KQQT) and 239–262 (VTDI…RREF).

In terms of assembly, binds DNA as a dimer.

The protein localises to the cytoplasm. Activates expression of the rhaBAD and rhaT operons. The polypeptide is HTH-type transcriptional activator RhaS (Escherichia coli O81 (strain ED1a)).